Here is a 228-residue protein sequence, read N- to C-terminus: Ribose-5-phosphate isomerase A (228 aa).

Residues 32–35, 85–88, and 98–101 each bind substrate; these read TGST, DGAD, and KGGG. The active-site Proton acceptor is glutamate 107. Residue lysine 125 coordinates substrate.

It belongs to the ribose 5-phosphate isomerase family. As to quaternary structure, homodimer.

It carries out the reaction aldehydo-D-ribose 5-phosphate = D-ribulose 5-phosphate. Its pathway is carbohydrate degradation; pentose phosphate pathway; D-ribose 5-phosphate from D-ribulose 5-phosphate (non-oxidative stage): step 1/1. Catalyzes the reversible conversion of ribose-5-phosphate to ribulose 5-phosphate. The protein is Ribose-5-phosphate isomerase A of Ralstonia nicotianae (strain ATCC BAA-1114 / GMI1000) (Ralstonia solanacearum).